Consider the following 275-residue polypeptide: Glutamate racemase (275 aa).

Residues 22–23 (DS) and 54–55 (YG) contribute to the substrate site. Cys-85 (proton donor/acceptor) is an active-site residue. Residue 86–87 (NT) participates in substrate binding. Catalysis depends on Cys-196, which acts as the Proton donor/acceptor. 197 to 198 (TH) lines the substrate pocket.

The protein belongs to the aspartate/glutamate racemases family.

The catalysed reaction is L-glutamate = D-glutamate. Its pathway is cell wall biogenesis; peptidoglycan biosynthesis. Functionally, provides the (R)-glutamate required for cell wall biosynthesis. This chain is Glutamate racemase, found in Pseudomonas syringae pv. tomato (strain ATCC BAA-871 / DC3000).